The chain runs to 266 residues: Undecaprenyl-diphosphatase (266 aa).

A run of 8 helical transmembrane segments spans residues 1 to 21 (MDTF…FLPI), 39 to 59 (QGLS…VIYF), 87 to 107 (WWII…KDFI), 111 to 131 (LRSA…LWWA), 149 to 169 (ALLI…RSGA), 183 to 203 (AAAR…AILV), 218 to 238 (ALTL…HYFL), and 246 to 266 (MTPF…FIFL).

This sequence belongs to the UppP family.

It is found in the cell inner membrane. It catalyses the reaction di-trans,octa-cis-undecaprenyl diphosphate + H2O = di-trans,octa-cis-undecaprenyl phosphate + phosphate + H(+). Functionally, catalyzes the dephosphorylation of undecaprenyl diphosphate (UPP). Confers resistance to bacitracin. This Shewanella sp. (strain MR-4) protein is Undecaprenyl-diphosphatase.